Consider the following 62-residue polypeptide: Potassium channel toxin kappa-KTx 3.2 (62 aa).

A signal peptide spans 1-26; the sequence is MKSTLMTASLLILVLLSIVDYASVYA. A propeptide spanning residues 27–36 is cleaved from the precursor; the sequence is ELIDSEISME. 2 cysteine pairs are disulfide-bonded: C43-C61 and C47-C57.

Belongs to the short scorpion toxin superfamily. Potassium channel inhibitor kappa-KTx family. Kappa-KTx 3 subfamily. As to expression, expressed by the venom gland.

The protein localises to the secreted. Potassium channel inhibitor (Kv). This chain is Potassium channel toxin kappa-KTx 3.2, found in Heterometrus petersii (Asian forest scorpion).